Reading from the N-terminus, the 248-residue chain is Cyclo(L-leucyl-L-leucyl) synthase (248 aa).

Ser37 (nucleophile) is an active-site residue. Substrate is bound by residues Asn40, 180–184, Tyr204, and 209–210; these read YVIAE and KL.

It belongs to the CDPS family. As to quaternary structure, monomer.

The enzyme catalyses 2 L-leucyl-tRNA(Leu) = cyclo(L-leucyl-L-leucyl) + 2 tRNA(Leu) + 2 H(+). In terms of biological role, involved in the biosynthesis of pulcherrimin, a red extracellular pigment. It uses activated amino acids in the form of aminoacyl-tRNAs (aa-tRNAs) as substrates to catalyze the ATP-independent formation of cyclodipeptides which are intermediates in diketopiperazine (DKP) biosynthetic pathways. Catalyzes the formation of cyclo(L-Leu-L-Leu) (cLL) from L-leucyl-tRNA(Leu). Can also incorporate various nonpolar residues, such as L-phenylalanine, L-leucine and methionine, into cyclodipeptides. In Bacillus subtilis (strain 168), this protein is Cyclo(L-leucyl-L-leucyl) synthase (yvmC).